A 410-amino-acid chain; its full sequence is 2-oxoisovalerate dehydrogenase subunit alpha (410 aa).

It belongs to the BCKDHA family. Heterodimer of an alpha and a beta chain. Thiamine diphosphate is required as a cofactor.

It catalyses the reaction N(6)-[(R)-lipoyl]-L-lysyl-[protein] + 3-methyl-2-oxobutanoate + H(+) = N(6)-[(R)-S(8)-2-methylpropanoyldihydrolipoyl]-L-lysyl-[protein] + CO2. Its function is as follows. The branched-chain alpha-keto dehydrogenase complex catalyzes the overall conversion of alpha-keto acids to acyl-CoA and CO(2). It contains multiple copies of three enzymatic components: branched-chain alpha-keto acid decarboxylase (E1), lipoamide acyltransferase (E2) and lipoamide dehydrogenase (E3). This Pseudomonas aeruginosa (strain ATCC 15692 / DSM 22644 / CIP 104116 / JCM 14847 / LMG 12228 / 1C / PRS 101 / PAO1) protein is 2-oxoisovalerate dehydrogenase subunit alpha (bkdA1).